A 1103-amino-acid polypeptide reads, in one-letter code: MAEAELHKERLQAIAEKRKRQTEIEGKRQQLDEQILLLQHSKSKVLREKWLLQGIPAGTAEEEEARRRQSEEDEFRVKQLEDNIQRLEQEIQTLESEESQISAKEQIILEKLKETEKSFKDFQKGFSSTDGDAVNYISSQLPDLPILCSRTAEPSPGQDGTSRAAGVGWENVLLKEGESASNATETSGPDMTIKKPPQLSEDDIWLKSEGDNYSATLLEPAASSLSPDHKNMEIEVSVAECKSVPGITSTPHPMDHPSAFYSPPHNGLLTDHHESLDNDVAREIRYLDEVLEANCCDSAVDGTYNGTSSPEPGAVVLVGGLSPPVHEATQPEPTERTASRQAPPHIELSNSSPDPMAEAERTNGHSPSQPRDALGDSLQVPVSPSSTTSSRCSSRDGEFTLTTLKKEAKFELRAFHEDKKPSKLFEDDEHEKEQYCIRKVRPSEEMLELEKERRELIRSQAVKKNPGIAAKWWNPPQEKTIEEQLDEEHLESHKKYKERKERRAQQEQLLLQKQLQQQQQQPPSQLCTAPASSHERASMIDKAKEDIVTEQIDFSAARKQFQLMENSRQAVAKGQSTPRLFSIKPFYRPLGSVNSDKPLTNPRPPSVGGPPEDSGASAAKGQKSPGALETPSAAGSQGNTASQGKEGPYSEPSKRGPLSKLWAEDGEFTSARAVLTVVKDDDHGILDQFSRSVNVSLTQEELDSGLDELSVRSQDTTVLETLSNDFSMDNISDSGASNETTNALQENSLADFSLPQTPQTDNPSEGRGEGVSKSFSDHGFYSPSSTLGDSPLVDDPLEYQAGLLVQNAIQQAIAEQVDKAVSKTSRDGAEQQGPEATVEEAEAAAFGSEKPQSMFEPPQVSSPVQEKRDVLPKILPAEDRALRERGPPQPLPAVQPSGPINMEETRPEGSYFSKYSEAAELRSTASLLATQESDVMVGPFKLRSRKQRTLSMIEEEIRAAQEREEELKRQRQVLQSTQSPRTKNAPSLPSRTCYKTAPGKIEKVKPPPSPTTEGPSLQPDLAPEEAAGTQRPKNLMQTLMEDYETHKSKRRERMDDSSYTSKLLSCKVTSEVLEATRVNRRKSALALRWEAGIYANQEEEDNE.

2 disordered regions span residues E178–P197 and Y304–D396. The span at S179–P189 shows a compositional bias: polar residues. Phosphoserine occurs at positions 322, 352, and 383. Residues V380–C392 show a composition bias toward low complexity. K405 is covalently cross-linked (Glycyl lysine isopeptide (Lys-Gly) (interchain with G-Cter in SUMO1); alternate). Residue K405 forms a Glycyl lysine isopeptide (Lys-Gly) (interchain with G-Cter in SUMO2); alternate linkage. Residues E444–Q521 adopt a coiled-coil conformation. 2 disordered regions span residues E483 to K544 and N566 to W662. A compositionally biased stretch (basic and acidic residues) spans L490–Q505. Over residues Q506–Q521 the composition is skewed to low complexity. The segment covering P522–A531 has biased composition (polar residues). Residues S533–K544 show a composition bias toward basic and acidic residues. The segment covering N566–R579 has biased composition (polar residues). Phosphoserine is present on residues S567 and S624. A compositionally biased stretch (polar residues) spans A633 to Q643. Phosphoserine is present on residues S692, S696, and S748. Over residues Q745–P763 the composition is skewed to polar residues. A disordered region spans residues Q745–D794. T757 is subject to Phosphothreonine. The tract at residues L797 to Q810 is PKA-RII subunit binding domain. Residues V817–A829 are compositionally biased toward basic and acidic residues. The disordered stretch occupies residues V817–P907. S862 is subject to Phosphoserine. A compositionally biased stretch (basic and acidic residues) spans Q865 to G886. A coiled-coil region spans residues K941–S979. Phosphoserine is present on residues S951, S979, S1009, and S1016. A disordered region spans residues E962–L1035. Over residues S976–S990 the composition is skewed to polar residues.

As to expression, expressed in infantile heart and muscle, and fibroblasts.

The protein resides in the apical cell membrane. Its function is as follows. Binds to regulatory subunit (RII) of protein kinase A. May be involved in establishing polarity in signaling systems or in integrating PKA-RII isoforms with downstream effectors to capture, amplify and focus diffuse, trans-cellular signals carried by cAMP. Binds to and modulates the structure of the actin cytoskeleton. The chain is PALM2-AKAP2 fusion protein from Homo sapiens (Human).